The sequence spans 553 residues: Phosphoenolpyruvate carboxykinase (ATP) (553 aa).

A disordered region spans residues 1-22; sequence MAPPTAVGSSINFEGHPTIKST. Residue 255–262 coordinates ATP; sequence GLSGTGKT.

Belongs to the phosphoenolpyruvate carboxykinase (ATP) family.

The enzyme catalyses oxaloacetate + ATP = phosphoenolpyruvate + ADP + CO2. Its pathway is carbohydrate biosynthesis; gluconeogenesis. This Candida albicans (Yeast) protein is Phosphoenolpyruvate carboxykinase (ATP) (PCK1).